Here is a 198-residue protein sequence, read N- to C-terminus: Glycerol-3-phosphate acyltransferase (198 aa).

Helical transmembrane passes span 2–22, 55–75, 88–108, 118–138, and 162–182; these read IIVI…TGYL, MITQ…CMLI, YLSI…FLGF, VGAF…VYFV, and IALR…GLLI.

Belongs to the PlsY family. As to quaternary structure, probably interacts with PlsX.

The protein localises to the cell membrane. It catalyses the reaction an acyl phosphate + sn-glycerol 3-phosphate = a 1-acyl-sn-glycero-3-phosphate + phosphate. It participates in lipid metabolism; phospholipid metabolism. Catalyzes the transfer of an acyl group from acyl-phosphate (acyl-PO(4)) to glycerol-3-phosphate (G3P) to form lysophosphatidic acid (LPA). This enzyme utilizes acyl-phosphate as fatty acyl donor, but not acyl-CoA or acyl-ACP. The chain is Glycerol-3-phosphate acyltransferase from Clostridium acetobutylicum (strain ATCC 824 / DSM 792 / JCM 1419 / IAM 19013 / LMG 5710 / NBRC 13948 / NRRL B-527 / VKM B-1787 / 2291 / W).